The sequence spans 350 residues: Bifunctional methylenetetrahydrofolate dehydrogenase/cyclohydrolase, mitochondrial (350 aa).

The transit peptide at 1–35 directs the protein to the mitochondrion; the sequence is MASVSLLSALAVRLLRPTHGCHPRLQPFHLAAVRN. The residue at position 50 (Lys-50) is an N6-acetyllysine; alternate. Residue Lys-50 forms a Glycyl lysine isopeptide (Lys-Gly) (interchain with G-Cter in SUMO2); alternate linkage. Substrate contacts are provided by residues 84–88 and 131–133; these read YVLNK and VQL. Residues 200–202 and Arg-233 each bind NAD(+); that span reads GRS. A substrate-binding site is contributed by 309–313; the sequence is PGGVG.

The protein belongs to the tetrahydrofolate dehydrogenase/cyclohydrolase family. Homodimer. Requires Mg(2+) as cofactor.

It is found in the mitochondrion. The catalysed reaction is (6R)-5,10-methylene-5,6,7,8-tetrahydrofolate + NAD(+) = (6R)-5,10-methenyltetrahydrofolate + NADH. It catalyses the reaction (6R)-5,10-methenyltetrahydrofolate + H2O = (6R)-10-formyltetrahydrofolate + H(+). Although its dehydrogenase activity is NAD-specific, it can also utilize NADP at a reduced efficiency. This chain is Bifunctional methylenetetrahydrofolate dehydrogenase/cyclohydrolase, mitochondrial (Mthfd2), found in Mus musculus (Mouse).